We begin with the raw amino-acid sequence, 164 residues long: Deoxyuridine 5'-triphosphate nucleotidohydrolase (164 aa).

Substrate contacts are provided by residues 66 to 68 (RSG), asparagine 79, 83 to 85 (TVD), and lysine 93.

It belongs to the dUTPase family. Mg(2+) serves as cofactor.

It catalyses the reaction dUTP + H2O = dUMP + diphosphate + H(+). It participates in pyrimidine metabolism; dUMP biosynthesis; dUMP from dCTP (dUTP route): step 2/2. Its function is as follows. This enzyme is involved in nucleotide metabolism: it produces dUMP, the immediate precursor of thymidine nucleotides and it decreases the intracellular concentration of dUTP so that uracil cannot be incorporated into DNA. The sequence is that of Deoxyuridine 5'-triphosphate nucleotidohydrolase from Rhodococcus erythropolis (strain PR4 / NBRC 100887).